The chain runs to 357 residues: Ubiquitin carboxyl-terminal hydrolase 2 (357 aa).

Residues 19 to 351 (TGLRNLGNTC…DAYLLFYELA (333 aa)) form the USP domain. The active-site Nucleophile is Cys28. Zn(2+)-binding residues include Cys177, Cys180, Cys228, and Cys231. His309 (proton acceptor) is an active-site residue.

The protein belongs to the peptidase C19 family. USP2 subfamily. In terms of assembly, homooligomer.

The protein localises to the cytoplasm. Its subcellular location is the perinuclear region. It carries out the reaction Thiol-dependent hydrolysis of ester, thioester, amide, peptide and isopeptide bonds formed by the C-terminal Gly of ubiquitin (a 76-residue protein attached to proteins as an intracellular targeting signal).. Hydrolase that deubiquitinates polyubiquitinated target proteins such as MDM2, MDM4 and CCND1. Possesses both ubiquitin-specific peptidase and isopeptidase activities. May play a role in the regulation of the circadian clock. This is Ubiquitin carboxyl-terminal hydrolase 2 (USP2) from Gallus gallus (Chicken).